A 329-amino-acid polypeptide reads, in one-letter code: Biotin synthase (329 aa).

The 231-residue stretch at F48–R278 folds into the Radical SAM core domain. C66, C70, and C73 together coordinate [4Fe-4S] cluster. Residues S143 and C203 each coordinate [2Fe-2S] cluster.

This sequence belongs to the radical SAM superfamily. Biotin synthase family. In terms of assembly, homodimer. [4Fe-4S] cluster is required as a cofactor. It depends on [2Fe-2S] cluster as a cofactor.

The enzyme catalyses (4R,5S)-dethiobiotin + (sulfur carrier)-SH + 2 reduced [2Fe-2S]-[ferredoxin] + 2 S-adenosyl-L-methionine = (sulfur carrier)-H + biotin + 2 5'-deoxyadenosine + 2 L-methionine + 2 oxidized [2Fe-2S]-[ferredoxin]. Its pathway is cofactor biosynthesis; biotin biosynthesis; biotin from 7,8-diaminononanoate: step 2/2. Catalyzes the conversion of dethiobiotin (DTB) to biotin by the insertion of a sulfur atom into dethiobiotin via a radical-based mechanism. The polypeptide is Biotin synthase (Geobacter sulfurreducens (strain ATCC 51573 / DSM 12127 / PCA)).